The following is an 880-amino-acid chain: DNA polymerase I (880 aa).

Positions threonine 174–arginine 268 constitute a 5'-3' exonuclease domain. Positions aspartate 302 to glutamate 470 constitute a 3'-5' exonuclease domain.

Belongs to the DNA polymerase type-A family. As to quaternary structure, single-chain monomer with multiple functions.

It catalyses the reaction DNA(n) + a 2'-deoxyribonucleoside 5'-triphosphate = DNA(n+1) + diphosphate. Functionally, in addition to polymerase activity, this DNA polymerase exhibits 3'-5' and 5'-3' exonuclease activity. The chain is DNA polymerase I (polA) from Bacillus subtilis (strain 168).